A 394-amino-acid polypeptide reads, in one-letter code: Protein NDRG1 (394 aa).

Ser-2 carries the N-acetylserine modification. 3 positions are modified to phosphoserine: Ser-2, Ser-319, and Ser-326. Residues 325 to 394 (RSRTASGSSV…AGPKSMEVSC (70 aa)) form a disordered region. Positions 327–339 (RTASGSSVTSLEG) are enriched in polar residues. Phosphothreonine is present on Thr-328. Ser-330 is subject to Phosphoserine. Phosphoserine; by SGK1 is present on Ser-332. Ser-333 is subject to Phosphoserine. A Phosphothreonine modification is found at Thr-335. Residue Ser-336 is modified to Phosphoserine. 3 tandem repeats follow at residues 339 to 348 (GTRSRSHTSE), 349 to 358 (GPRSRSHTSE), and 359 to 368 (GSRSRSHTSE). The 3 X 10 AA tandem repeats of G-[PST]-R-S-R-S-H-T-S-E stretch occupies residues 339–368 (GTRSRSHTSEGPRSRSHTSEGSRSRSHTSE). Residue Thr-340 is modified to Phosphothreonine. Ser-342 is subject to Phosphoserine. Positions 345 to 371 (HTSEGPRSRSHTSEGSRSRSHTSEDAR) are enriched in basic and acidic residues. At Thr-346 the chain carries Phosphothreonine. Ser-352 carries the post-translational modification Phosphoserine. Thr-356 carries the post-translational modification Phosphothreonine; by SGK1. Phosphoserine occurs at positions 362 and 364. Thr-366 and Thr-375 each carry phosphothreonine. Over residues 374–386 (ITPSSGATGNNAG) the composition is skewed to polar residues.

Belongs to the NDRG family. Interacts with RAB4A (membrane-bound form); the interaction involves NDRG1 in vesicular recycling of CDH1. Interacts with APOA1, APOA2, PRA1 and RTN1. Under stress conditions, phosphorylated in the C-terminal on many serine and threonine residues. Phosphorylated in vitro by PKA. Phosphorylation enhanced by increased intracellular cAMP levels. Homocysteine induces dephosphorylation. Phosphorylation by SGK1 is cell cycle dependent.

The protein resides in the cytoplasm. Its subcellular location is the cytosol. It is found in the cytoskeleton. The protein localises to the microtubule organizing center. It localises to the centrosome. The protein resides in the nucleus. Its subcellular location is the cell membrane. Stress-responsive protein involved in hormone responses, cell growth, and differentiation. Acts as a tumor suppressor in many cell types. Necessary but not sufficient for p53/TP53-mediated caspase activation and apoptosis. Has a role in cell trafficking notably of the Schwann cell and is necessary for the maintenance and development of the peripheral nerve myelin sheath. Required for vesicular recycling of CDH1 and TF. May also function in lipid trafficking. Protects cells from spindle disruption damage. Functions in p53/TP53-dependent mitotic spindle checkpoint. Regulates microtubule dynamics and maintains euploidy. This chain is Protein NDRG1 (Ndrg1), found in Rattus norvegicus (Rat).